The primary structure comprises 216 residues: Acyl-homoserine-lactone synthase (216 aa).

This sequence belongs to the autoinducer synthase family.

The enzyme catalyses a fatty acyl-[ACP] + S-adenosyl-L-methionine = an N-acyl-L-homoserine lactone + S-methyl-5'-thioadenosine + holo-[ACP] + H(+). Required for the synthesis of OHHL (N-(3-oxohexanoyl)-L-homoserine lactone), an autoinducer molecule which binds to CarR and thus acts in the control of the biosynthesis of carbapenem antibiotics. In Pectobacterium carotovorum subsp. carotovorum (Erwinia carotovora subsp. carotovora), this protein is Acyl-homoserine-lactone synthase (carI).